A 372-amino-acid chain; its full sequence is 1,3,6,8-tetrahydroxynaphthalene synthase (372 aa).

Cys-138 is an active-site residue.

Belongs to the thiolase-like superfamily. Chalcone/stilbene synthases family. In terms of assembly, homodimer.

The catalysed reaction is 5 malonyl-CoA + 5 H(+) = naphthalene-1,3,6,8-tetrol + 5 CO2 + 5 CoA + H2O. It participates in pigment biosynthesis; melanin biosynthesis. Involved in the biosynthesis of melanin but also various secondary metabolites containing a naphthoquinone ring. Catalyzes the iterative condensation of five CoA-linked malonyl units to form a pentaketide intermediate. THNS subsequently catalyzes the dual intramolecular Claisen and aldol condensations of this linear intermediate to produce the fused ring of 1,3,6,8-tetrahydroxynaphthalene (THN). This chain is 1,3,6,8-tetrahydroxynaphthalene synthase, found in Streptomyces griseus.